We begin with the raw amino-acid sequence, 517 residues long: Beta-glucosidase 17 (517 aa).

Residues 1-23 (MAIKSIFIIIIISIITSISELYA) form the signal peptide. A beta-D-glucoside-binding positions include Q54, H158, and 203 to 204 (NE). The active-site Proton donor is E204. A disulfide bridge links C223 with C230. N-linked (GlcNAc...) asparagine glycosylation occurs at N229. Y346 is an a beta-D-glucoside binding site. N-linked (GlcNAc...) asparagine glycans are attached at residues N361 and N371. Residues E417, W466, 473-474 (EW), and Y482 each bind a beta-D-glucoside. Residue E417 is the Nucleophile of the active site. A glycan (N-linked (GlcNAc...) asparagine) is linked at N510.

The protein belongs to the glycosyl hydrolase 1 family.

The enzyme catalyses Hydrolysis of terminal, non-reducing beta-D-glucosyl residues with release of beta-D-glucose.. In Arabidopsis thaliana (Mouse-ear cress), this protein is Beta-glucosidase 17.